A 783-amino-acid chain; its full sequence is Probable potassium transporter 2 (783 aa).

Over methionine 1–asparagine 21 the chain is Cytoplasmic. Residues leucine 22 to leucine 42 traverse the membrane as a helical segment. The Extracellular segment spans residues tyrosine 43 to threonine 61. Residues valine 62–valine 82 traverse the membrane as a helical segment. The Cytoplasmic portion of the chain corresponds to threonine 83–threonine 152. The helical transmembrane segment at valine 153–proline 173 threads the bilayer. The Extracellular segment spans residues alanine 174–threonine 189. Residues glycine 190–leucine 210 form a helical membrane-spanning segment. The Cytoplasmic segment spans residues glutamine 211–lysine 217. Residues valine 218–leucine 238 form a helical membrane-spanning segment. The Extracellular portion of the chain corresponds to tyrosine 239–glycine 268. The chain crosses the membrane as a helical span at residues tryptophan 269–leucine 289. The Cytoplasmic segment spans residues glycine 290–arginine 298. The chain crosses the membrane as a helical span at residues leucine 299–phenylalanine 319. At leucine 320–proline 338 the chain is on the extracellular side. Residues isoleucine 339–isoleucine 359 traverse the membrane as a helical segment. At serine 360–glutamine 390 the chain is on the cytoplasmic side. A helical membrane pass occupies residues isoleucine 391–phenylalanine 411. Over arginine 412 to glycine 422 the chain is Extracellular. The chain crosses the membrane as a helical span at residues valine 423 to valine 443. The Cytoplasmic portion of the chain corresponds to tryptophan 444 to asparagine 447. A helical membrane pass occupies residues isoleucine 448–serine 468. Residues serine 469 to glutamine 475 lie on the Extracellular side of the membrane. Residues glycine 476 to tyrosine 496 traverse the membrane as a helical segment. Residues glycine 497–valine 783 are Cytoplasmic-facing. The tract at residues aspartate 662 to valine 691 is disordered. Polar residues predominate over residues leucine 677 to valine 691.

The protein belongs to the HAK/KUP transporter (TC 2.A.72.3) family.

It is found in the cell membrane. It catalyses the reaction K(+)(in) = K(+)(out). The enzyme catalyses Na(+)(in) = Na(+)(out). High-affinity potassium transporter. Can transport sodium under high sodium and low potassium concentrations in the extracellular environment. In Oryza sativa subsp. japonica (Rice), this protein is Probable potassium transporter 2 (HAK2).